A 517-amino-acid polypeptide reads, in one-letter code: T-complex protein 11-like protein 2 (517 aa).

The interval 1-59 (MPFNGEKQCVSEDQQSDSESSRFAEGVASLSDYECSRQSFTSDSSSKSSSPASTSPPRG) is disordered. At serine 16 the chain carries Phosphoserine. The segment covering 36–55 (SRQSFTSDSSSKSSSPASTS) has biased composition (low complexity).

This sequence belongs to the TCP11 family. In terms of assembly, interacts with FMNL2; this interaction promotes muscle-derived satellite cell (MDSC) migration and differentiation.

It is found in the cytoplasm. Its subcellular location is the cytoskeleton. Functionally, promotes the migration of muscle-derived satellite cells (MDSCs) during differentiation throught interaction with FMNL2 and therefore may participate in microfilament assembly. This chain is T-complex protein 11-like protein 2, found in Mus musculus (Mouse).